Consider the following 1821-residue polypeptide: Latent-transforming growth factor beta-binding protein 2 (1821 aa).

A signal peptide spans 1–35 (MRPRTKARSPGRALRNPWRGFLPLTLALFVGAGHA). Disordered regions lie at residues 38-58 (DPVG…RPGG) and 81-165 (GLQP…RLTG). Residues 94-115 (SPRRPTEAEARRPSRAQQSRRV) form a heparin-binding region. 2 stretches are compositionally biased toward low complexity: residues 108–120 (RAQQ…PPAQ) and 129–145 (QQQP…LPRL). Residue Asn181 is glycosylated (N-linked (GlcNAc...) asparagine). One can recognise an EGF-like 1 domain in the interval 187-219 (IKPVCEPPCQNRGSCSRPQLCVCRSGFRGARCE). 3 disulfides stabilise this stretch: Cys191/Cys201, Cys195/Cys207, and Cys209/Cys218. The interval 229-339 (PQNSRLAPRR…AVPLEHPSSP (111 aa)) is disordered. Positions 232–249 (SRLAPRRWAERSPNLRRS) are heparin-binding. The span at 262–274 (PPAPQSPPAPQSP) shows a compositional bias: pro residues. 2 stretches are compositionally biased toward polar residues: residues 280–292 (SGLS…QQHV) and 304–314 (ATASSQLSSNA). Residue Asn343 is glycosylated (N-linked (GlcNAc...) asparagine). 344–354 (LTEKIKKIKIV) contributes to the heparin binding site. The Cell attachment site signature appears at 375 to 377 (RGD). An EGF-like 2 domain is found at 396 to 428 (RIYFCQIPCLNGGRCIGRDECWCPANSTGKFCH). Intrachain disulfides connect Cys400-Cys410, Cys404-Cys416, and Cys418-Cys427. Asn421 carries an N-linked (GlcNAc...) asparagine glycan. Position 506 is a phosphoserine (Ser506). The interval 510 to 544 (RPPPWLPASPGHSLWDSNNIPARSGEPPRPLPPAA) is disordered. Positions 552–604 (GRCYLNTVNGQCANPLLELTTQEDCCGSVGAFWGVTLCAPCPPRPASPVIENG) constitute a TB 1 domain. 3 cysteine pairs are disulfide-bonded: Cys554–Cys576, Cys563–Cys589, and Cys577–Cys592. Asn616 is a glycosylation site (N-linked (GlcNAc...) asparagine). The EGF-like 3; calcium-binding domain maps to 622–662 (DINECLTLGLCKDAECVNTRGSYLCTCRPGLMLDPSRSRCV). 7 cysteine pairs are disulfide-bonded: Cys626-Cys637, Cys632-Cys646, Cys648-Cys661, Cys674-Cys696, Cys683-Cys709, Cys697-Cys712, and Cys698-Cys724. Residues 672–724 (GLCYRSLGPGTCTLPLAQRITKQICCCSRVGKAWGSECEKCPLPGTEAFREIC) enclose the TB 2 domain. Over residues 744–757 (AEEEELARPPREQG) the composition is skewed to basic and acidic residues. Residues 744-772 (AEEEELARPPREQGQRSSGALPGPAERQP) form a disordered region. A glycan (N-linked (GlcNAc...) asparagine) is linked at Asn811. The region spanning 844 to 886 (GIDRCAAGATNVCGPGTCVNLPDGYRCVCSPGYQLHPSQAYCT) is the EGF-like 4 domain. 49 disulfides stabilise this stretch: Cys848–Cys861, Cys856–Cys870, Cys872–Cys885, Cys891–Cys902, Cys896–Cys911, Cys913–Cys928, Cys934–Cys945, Cys940–Cys954, Cys956–Cys968, Cys974–Cys985, Cys980–Cys994, Cys997–Cys1008, Cys1014–Cys1025, Cys1020–Cys1034, Cys1036–Cys1049, Cys1055–Cys1066, Cys1061–Cys1075, Cys1078–Cys1091, Cys1097–Cys1108, Cys1103–Cys1117, Cys1120–Cys1133, Cys1139–Cys1151, Cys1146–Cys1160, Cys1162–Cys1174, Cys1180–Cys1192, Cys1186–Cys1201, Cys1203–Cys1216, Cys1222–Cys1233, Cys1228–Cys1242, Cys1244–Cys1257, Cys1263–Cys1276, Cys1271–Cys1285, Cys1289–Cys1301, Cys1307–Cys1319, Cys1313–Cys1328, Cys1330–Cys1343, Cys1349–Cys1361, Cys1356–Cys1370, Cys1372–Cys1386, Cys1413–Cys1436, Cys1423–Cys1448, Cys1437–Cys1451, Cys1438–Cys1463, Cys1489–Cys1502, Cys1497–Cys1511, Cys1513–Cys1526, Cys1532–Cys1542, Cys1537–Cys1551, and Cys1553–Cys1566. Residues 887 to 929 (DDNECLRDPCKGKGRCINRVGSYSCFCYPGYTLATSGATQECQ) enclose the EGF-like 5; calcium-binding domain. Residues 930 to 969 (DINECEQPGVCSGGQCTNTEGSYHCECDQGYIMVRKGHCQ) form the EGF-like 6; calcium-binding domain. The 40-residue stretch at 970-1009 (DINECRHPGTCPDGRCVNSPGSYTCLACEEGYRGQSGSCV) folds into the EGF-like 7; calcium-binding domain. The region spanning 1010–1050 (DVNECLTPGVCAHGKCTNLEGSFRCSCEQGYEVTSDEKGCQ) is the EGF-like 8; calcium-binding domain. The 42-residue stretch at 1051 to 1092 (DVDECASRASCPTGLCLNTEGSFACSACENGYWVNEDGTACE) folds into the EGF-like 9; calcium-binding domain. The EGF-like 10; calcium-binding domain maps to 1093 to 1134 (DLDECAFPGVCPSGVCTNTAGSFSCKDCDGGYRPSPLGDSCE). Positions 1135–1175 (DVDECEDPQSSCLGGECKNTVGSYQCLCPQGFQLANGTVCE) constitute an EGF-like 11; calcium-binding domain. A glycan (N-linked (GlcNAc...) asparagine) is linked at Asn1170. The 42-residue stretch at 1176–1217 (DVNECMGEEHCAPHGECLNSHGSFFCLCAPGFVSAEGGTSCQ) folds into the EGF-like 12; calcium-binding domain. In terms of domain architecture, EGF-like 13; calcium-binding spans 1218 to 1258 (DVDECATTDPCVGGHCVNTEGSFNCLCETGFQPSPESGECV). The 44-residue stretch at 1259-1302 (DIDECEDYGDPVCGTWKCENSPGSYRCVLGCQPGFHMAPNGDCI) folds into the EGF-like 14; calcium-binding domain. Residues 1303–1344 (DIDECANDTMCGSHGFCDNTDGSFRCLCDQGFEISPSGWDCV) enclose the EGF-like 15; calcium-binding domain. A glycan (N-linked (GlcNAc...) asparagine) is linked at Asn1309. One can recognise an EGF-like 16; calcium-binding domain in the interval 1345-1387 (DVNECELMLAVCGAALCENVEGSFLCLCASDLEEYDAQEGHCR). One can recognise a TB 3 domain in the interval 1411–1463 (MDCYSGQKGHAPCSSVLGRNTTQAECCCTQGASWGDACDLCPSEDSAEFSEIC). N-linked (GlcNAc...) asparagine glycosylation occurs at Asn1430. The 43-residue stretch at 1485 to 1527 (DADECVIFGPGLCPNGRCLNTVPGYVCLCNPGFHYDASHKKCE) folds into the EGF-like 17; calcium-binding domain. Positions 1528–1567 (DHDECQDLACENGECVNTEGSFHCFCSPPLTLDLSQQRCM) constitute an EGF-like 18; calcium-binding domain. The N-linked (GlcNAc...) asparagine glycan is linked to Asn1568. In terms of domain architecture, TB 4 spans 1584–1636 (DICWKKVTNDVCSEPLRGHRTTYTECCCQDGEAWSQQCALCPPRSSEVYAQLC). Disulfide bonds link Cys1586-Cys1609, Cys1595-Cys1621, Cys1610-Cys1624, Cys1611-Cys1636, Cys1737-Cys1748, Cys1743-Cys1757, Cys1759-Cys1772, Cys1778-Cys1793, Cys1788-Cys1802, and Cys1804-Cys1817. Positions 1639–1821 (ARIEAEREAG…AGPPHCTAKE (183 aa)) are C-terminal domain. One can recognise an EGF-like 19; calcium-binding domain in the interval 1733–1773 (QAEECGILNGCENGRCVRVREGYTCDCFEGFQLDAAHMACV). The EGF-like 20; calcium-binding domain maps to 1774-1818 (DVNECDDLNGPAVLCVHGYCENTEGSYRCHCSPGYVAEAGPPHCT).

This sequence belongs to the LTBP family. As to quaternary structure, forms part of the large latent transforming growth factor beta precursor complex; removal is essential for activation of complex. Interacts with SDC4. Interacts (via C-terminal domain) with FBN1 (via N-terminal domain) in a Ca(+2)-dependent manner. Post-translationally, N-Glycosylated. Contains hydroxylated asparagine residues. In terms of tissue distribution, expressed in the aorta (at protein level). Expressed in lung, weakly expressed in heart, placenta, liver and skeletal muscle.

The protein resides in the secreted. Its subcellular location is the extracellular space. It is found in the extracellular matrix. Functionally, may play an integral structural role in elastic-fiber architectural organization and/or assembly. The chain is Latent-transforming growth factor beta-binding protein 2 (LTBP2) from Homo sapiens (Human).